Here is a 124-residue protein sequence, read N- to C-terminus: Large ribosomal subunit protein bL17 (124 aa).

This sequence belongs to the bacterial ribosomal protein bL17 family. Part of the 50S ribosomal subunit. Contacts protein L32.

This chain is Large ribosomal subunit protein bL17, found in Persephonella marina (strain DSM 14350 / EX-H1).